A 129-amino-acid chain; its full sequence is Ribosome-binding factor A (129 aa).

It belongs to the RbfA family. As to quaternary structure, monomer. Binds 30S ribosomal subunits, but not 50S ribosomal subunits or 70S ribosomes.

The protein localises to the cytoplasm. Its function is as follows. One of several proteins that assist in the late maturation steps of the functional core of the 30S ribosomal subunit. Associates with free 30S ribosomal subunits (but not with 30S subunits that are part of 70S ribosomes or polysomes). Required for efficient processing of 16S rRNA. May interact with the 5'-terminal helix region of 16S rRNA. The protein is Ribosome-binding factor A of Marinomonas sp. (strain MWYL1).